We begin with the raw amino-acid sequence, 317 residues long: Cell division protein FtsX (317 aa).

Residues 1 to 39 (MAIVRHKQPPLRRFMMYWVDHARQAFSSLGELWRNPLAS) are Cytoplasmic-facing. A helical membrane pass occupies residues 40-60 (LMTLAVLGVSLALPSCFHVLL). Topologically, residues 61–188 (KNAEVVEGSW…LQGIMNLLRH (128 aa)) are periplasmic. A helical transmembrane segment spans residues 189–209 (TITGIAVLLLSAVLLIVGNTL). Residues 210-241 (RLNILNQRSEIEVLKLVGATDAFIHRPFLYTG) lie on the Cytoplasmic side of the membrane. Residues 242–262 (IWFGVIGGMLAWWLTEVMVIW) form a helical membrane-spanning segment. Residues 263-280 (SEGVVNELAGLYNSNFRL) are Periplasmic-facing. The chain crosses the membrane as a helical span at residues 281-301 (VGMGAVDGINLILLGALLGLI). Residues 302-317 (ASWFSVHRHIRDIEPS) are Cytoplasmic-facing.

The protein belongs to the ABC-4 integral membrane protein family. FtsX subfamily. Forms a membrane-associated complex with FtsE.

Its subcellular location is the cell inner membrane. Its function is as follows. Part of the ABC transporter FtsEX involved in cellular division. Encoded in an operon consisting of genes ftsY, ftsE and ftsX. This Aeromonas hydrophila protein is Cell division protein FtsX.